Here is a 273-residue protein sequence, read N- to C-terminus: 4-hydroxy-tetrahydrodipicolinate reductase (273 aa).

NAD(+) is bound by residues Gly12–Met17 and Glu38. Arg39 contacts NADP(+). Residues Gly102–Thr104 and Ala126–Phe129 contribute to the NAD(+) site. His159 serves as the catalytic Proton donor/acceptor. Residue His160 participates in (S)-2,3,4,5-tetrahydrodipicolinate binding. Lys163 acts as the Proton donor in catalysis. Gly169 to Thr170 provides a ligand contact to (S)-2,3,4,5-tetrahydrodipicolinate.

Belongs to the DapB family. Homotetramer.

The protein resides in the cytoplasm. The enzyme catalyses (S)-2,3,4,5-tetrahydrodipicolinate + NAD(+) + H2O = (2S,4S)-4-hydroxy-2,3,4,5-tetrahydrodipicolinate + NADH + H(+). It catalyses the reaction (S)-2,3,4,5-tetrahydrodipicolinate + NADP(+) + H2O = (2S,4S)-4-hydroxy-2,3,4,5-tetrahydrodipicolinate + NADPH + H(+). It functions in the pathway amino-acid biosynthesis; L-lysine biosynthesis via DAP pathway; (S)-tetrahydrodipicolinate from L-aspartate: step 4/4. In terms of biological role, catalyzes the conversion of 4-hydroxy-tetrahydrodipicolinate (HTPA) to tetrahydrodipicolinate. The chain is 4-hydroxy-tetrahydrodipicolinate reductase from Shigella boydii serotype 4 (strain Sb227).